Consider the following 1025-residue polypeptide: Retrovirus-related Pol polyprotein from type-1 retrotransposable element R2 (1025 aa).

The span at 1–11 shows a compositional bias: polar residues; it reads NQIKKSNTSTG. A disordered region spans residues 1-38; the sequence is NQIKKSNTSTGARIPKAMTNPADNFAGGQWKPPGRRSA. The segment at 46–69 adopts a C2H2-type zinc-finger fold; sequence FVCEHCLRAFTTNTGRGLHIKRAH. Residues 146 to 158 are compositionally biased toward basic and acidic residues; sequence NRARETELTRLET. Positions 146-172 are disordered; sequence NRARETELTRLETADEDPASQEQDNPN. Residues 358-635 enclose the Reverse transcriptase domain; the sequence is MIMYHGQCPR…DQWKYLGVVY (278 aa). The segment at 755-1025 is nucleic acid-binding endonuclease; sequence SLLGGDWVAE…YRTERRRTAN (271 aa).

It catalyses the reaction DNA(n) + a 2'-deoxyribonucleoside 5'-triphosphate = DNA(n+1) + diphosphate. The polypeptide is Retrovirus-related Pol polyprotein from type-1 retrotransposable element R2 (Nasonia vitripennis (Parasitic wasp)).